A 103-amino-acid polypeptide reads, in one-letter code: NADH-quinone oxidoreductase subunit K 2 (103 aa).

The next 3 helical transmembrane spans lie at 7–27 (LAWYLMLSAFLFICGVIGFMI), 31–51 (IITIFMCIELMLNAVNLTFVA), and 63–83 (IFVFFVMVVAAAESAVGLGII).

The protein belongs to the complex I subunit 4L family. As to quaternary structure, NDH-1 is composed of 14 different subunits. Subunits NuoA, H, J, K, L, M, N constitute the membrane sector of the complex.

The protein resides in the cell inner membrane. It catalyses the reaction a quinone + NADH + 5 H(+)(in) = a quinol + NAD(+) + 4 H(+)(out). Functionally, NDH-1 shuttles electrons from NADH, via FMN and iron-sulfur (Fe-S) centers, to quinones in the respiratory chain. The immediate electron acceptor for the enzyme in this species is believed to be ubiquinone. Couples the redox reaction to proton translocation (for every two electrons transferred, four hydrogen ions are translocated across the cytoplasmic membrane), and thus conserves the redox energy in a proton gradient. The chain is NADH-quinone oxidoreductase subunit K 2 from Koribacter versatilis (strain Ellin345).